A 124-amino-acid polypeptide reads, in one-letter code: Large ribosomal subunit protein bL12 (124 aa).

The protein belongs to the bacterial ribosomal protein bL12 family. In terms of assembly, homodimer. Part of the ribosomal stalk of the 50S ribosomal subunit. Forms a multimeric L10(L12)X complex, where L10 forms an elongated spine to which 2 to 4 L12 dimers bind in a sequential fashion. Binds GTP-bound translation factors.

Functionally, forms part of the ribosomal stalk which helps the ribosome interact with GTP-bound translation factors. Is thus essential for accurate translation. This is Large ribosomal subunit protein bL12 from Cupriavidus metallidurans (strain ATCC 43123 / DSM 2839 / NBRC 102507 / CH34) (Ralstonia metallidurans).